A 108-amino-acid chain; its full sequence is Insulin (108 aa).

An N-terminal signal peptide occupies residues 1 to 24; sequence MALWTRLLPLLALLALWAPAPAQA. Disulfide bonds link Cys-31-Cys-94, Cys-43-Cys-107, and Cys-93-Cys-98. A propeptide spans 57–85 (c peptide); the sequence is EAENPQAGAVELGGGLGGLQALALEGPPQ.

This sequence belongs to the insulin family. In terms of assembly, heterodimer of a B chain and an A chain linked by two disulfide bonds.

Its subcellular location is the secreted. Functionally, insulin decreases blood glucose concentration. It increases cell permeability to monosaccharides, amino acids and fatty acids. It accelerates glycolysis, the pentose phosphate cycle, and glycogen synthesis in liver. This chain is Insulin (INS), found in Sus scrofa (Pig).